The chain runs to 304 residues: Nod factor export ATP-binding protein I (304 aa).

The ABC transporter domain occupies 6 to 236; sequence IDFRNVEKRY…EIGCDVIEIY (231 aa). 38-45 lines the ATP pocket; the sequence is GPNGAGKT.

Belongs to the ABC transporter superfamily. Lipooligosaccharide exporter (TC 3.A.1.102) family. As to quaternary structure, the complex is composed of two ATP-binding proteins (NodI) and two transmembrane proteins (NodJ).

It localises to the cell inner membrane. Part of the ABC transporter complex NodIJ involved in the export of the nodulation factors (Nod factors), the bacterial signal molecules that induce symbiosis and subsequent nodulation induction. Nod factors are LCO (lipo-chitin oligosaccharide), a modified beta-1,4-linked N-acetylglucosamine oligosaccharide. This subunit is responsible for energy coupling to the transport system. The protein is Nod factor export ATP-binding protein I of Burkholderia orbicola (strain AU 1054).